Here is a 210-residue protein sequence, read N- to C-terminus: 3-hexulose-6-phosphate synthase (210 aa).

The protein belongs to the HPS/KGPDC family. HPS subfamily.

It catalyses the reaction D-ribulose 5-phosphate + formaldehyde = D-arabino-hex-3-ulose 6-phosphate. The protein operates within one-carbon metabolism; formaldehyde assimilation via RuMP pathway; D-fructose 6-phosphate from D-ribulose 5-phosphate and formaldehyde: step 1/2. Functionally, catalyzes the condensation of ribulose 5-phosphate with formaldehyde to form 3-hexulose 6-phosphate. This is 3-hexulose-6-phosphate synthase from Staphylococcus aureus (strain NCTC 8325 / PS 47).